We begin with the raw amino-acid sequence, 228 residues long: Ribose-5-phosphate isomerase A (228 aa).

Residues 27 to 30 (TGTT), 86 to 89 (DGAD), and 100 to 103 (KGMG) contribute to the substrate site. The active-site Proton acceptor is the Glu-109. Lys-127 contributes to the substrate binding site.

Belongs to the ribose 5-phosphate isomerase family. Homodimer.

It catalyses the reaction aldehydo-D-ribose 5-phosphate = D-ribulose 5-phosphate. Its pathway is carbohydrate degradation; pentose phosphate pathway; D-ribose 5-phosphate from D-ribulose 5-phosphate (non-oxidative stage): step 1/1. In terms of biological role, catalyzes the reversible conversion of ribose-5-phosphate to ribulose 5-phosphate. This Borreliella afzelii (strain PKo) (Borrelia afzelii) protein is Ribose-5-phosphate isomerase A.